We begin with the raw amino-acid sequence, 310 residues long: p-hydroxybenzoic acid efflux pump subunit AaeA (310 aa).

Residues 12–32 (AITVVLVILAFIAIFNAWVYY) traverse the membrane as a helical segment.

The protein belongs to the membrane fusion protein (MFP) (TC 8.A.1) family.

Its subcellular location is the cell inner membrane. Its function is as follows. Forms an efflux pump with AaeB. The sequence is that of p-hydroxybenzoic acid efflux pump subunit AaeA from Escherichia coli O9:H4 (strain HS).